The following is a 218-amino-acid chain: GTP cyclohydrolase 1 (218 aa).

3 residues coordinate Zn(2+): cysteine 109, histidine 112, and cysteine 180.

It belongs to the GTP cyclohydrolase I family. Toroid-shaped homodecamer, composed of two pentamers of five dimers.

The enzyme catalyses GTP + H2O = 7,8-dihydroneopterin 3'-triphosphate + formate + H(+). It participates in cofactor biosynthesis; 7,8-dihydroneopterin triphosphate biosynthesis; 7,8-dihydroneopterin triphosphate from GTP: step 1/1. This is GTP cyclohydrolase 1 from Haemophilus ducreyi (strain 35000HP / ATCC 700724).